A 204-amino-acid polypeptide reads, in one-letter code: Signal peptidase I (204 aa).

Over 1-10 (MNLFKNFLKE) the chain is Cytoplasmic. The helical transmembrane segment at 11–30 (WGLFLLILSLLALSRIFFWS) threads the bilayer. Over 31–204 (NVRVEGHSMD…FWPITRIGTF (174 aa)) the chain is Extracellular. Catalysis depends on residues Ser-38 and Lys-76.

The protein belongs to the peptidase S26 family.

The protein localises to the cell membrane. The enzyme catalyses Cleavage of hydrophobic, N-terminal signal or leader sequences from secreted and periplasmic proteins.. This chain is Signal peptidase I (lepB), found in Streptococcus pneumoniae (strain ATCC BAA-255 / R6).